Consider the following 145-residue polypeptide: Hemoglobin subunit beta (145 aa).

Positions 1-145 (MLTAEEKAAV…VANALAHRYH (145 aa)) constitute a Globin domain. Position 11 is a phosphothreonine (Thr-11). At Ser-43 the chain carries Phosphoserine. Lys-58 bears the N6-acetyllysine mark. Position 62 (His-62) interacts with heme b. An N6-acetyllysine modification is found at Lys-81. Residue His-91 coordinates heme b. The residue at position 92 (Cys-92) is an S-nitrosocysteine.

This sequence belongs to the globin family. In terms of assembly, heterotetramer of two alpha chains and two beta chains. In terms of tissue distribution, red blood cells.

Involved in oxygen transport from the lung to the various peripheral tissues. In terms of biological role, functions as an endogenous inhibitor of enkephalin-degrading enzymes such as DPP3, and may thereby play a role as a regulator of pain and inflammation. The sequence is that of Hemoglobin subunit beta (HBB) from Bos taurus (Bovine).